A 370-amino-acid chain; its full sequence is MDSPRQIVNFGPGPAKLPHSVLLEIQKELLDYKGLGISVLEMSHRSSDFAKIVNNTENLVRELLAVPDNYKVIFLQGGGCGQFSAVPLNLIGLKPGRCADYVVTGAWSAKAAEEAKKFGTVNIVHPKLGSYTKIPDPSTWNLNPDASYVYYCANETVHGVEFDFVPDVKGAILVCDMSSNFLSRPVDVSKFGVIFAGAQKNVGAAGVTVVIVRDDLLGFALRECPSVLEYKVQATSSSLYNTPPCFSIYVMGLVLEWIKNNGGAAAMKKLSTIKSQMIYEIIDNSQGFYVCPVEPRNRSMMNIPFRIGNAKGDEALEKRFLDKALELHMISLKGHRSVGGVRVSLYNAVTIEDVQKLASFMKNFLEMHQL.

N-acetylmethionine is present on M1. 2 residues coordinate O-phospho-L-serine: H44 and R45. The residue at position 51 (K51) is an N6-acetyllysine. Pyridoxal 5'-phosphate is bound by residues G79, C80, and W107. Residue K127 is modified to N6-acetyllysine. Positions 156, 176, and 199 each coordinate pyridoxal 5'-phosphate. An N6-(pyridoxal phosphate)lysine modification is found at K200. 2 residues coordinate pyridoxal 5'-phosphate: N241 and T242. 3 positions are modified to N6-acetyllysine: K269, K318, and K323. S331 is modified (phosphoserine). K333 bears the N6-acetyllysine mark. O-phospho-L-serine contacts are provided by H335, R336, and R342.

The protein belongs to the class-V pyridoxal-phosphate-dependent aminotransferase family. SerC subfamily. As to quaternary structure, homodimer. Pyridoxal 5'-phosphate serves as cofactor.

It catalyses the reaction O-phospho-L-serine + 2-oxoglutarate = 3-phosphooxypyruvate + L-glutamate. Its pathway is amino-acid biosynthesis; L-serine biosynthesis; L-serine from 3-phospho-D-glycerate: step 2/3. Functionally, involved in L-serine biosynthesis via the phosphorylated pathway, a three-step pathway converting the glycolytic intermediate 3-phospho-D-glycerate into L-serine. Catalyzes the second step, that is the pyridoxal 5'-phosphate-dependent transamination of 3-phosphohydroxypyruvate and L-glutamate to O-phosphoserine (OPS) and alpha-ketoglutarate. This is Phosphoserine aminotransferase (PSAT1) from Oryctolagus cuniculus (Rabbit).